The chain runs to 59 residues: Large ribosomal subunit protein bL32 (59 aa).

A disordered region spans residues 1–59; the sequence is MAVQQNRKTPSKRGMRRSHDALSGPALSVEPQTGETHRRHHVSPDGYYRGRKVMQGRED. The segment covering 49 to 59 has biased composition (basic residues); that stretch reads RGRKVMQGRED.

It belongs to the bacterial ribosomal protein bL32 family.

The protein is Large ribosomal subunit protein bL32 of Alkalilimnicola ehrlichii (strain ATCC BAA-1101 / DSM 17681 / MLHE-1).